A 361-amino-acid polypeptide reads, in one-letter code: Phosphoserine aminotransferase (361 aa).

L-glutamate-binding residues include serine 9 and arginine 42. Pyridoxal 5'-phosphate-binding positions include 76–77 (AR), tryptophan 102, threonine 153, aspartate 173, and glutamine 196. Position 197 is an N6-(pyridoxal phosphate)lysine (lysine 197). 238–239 (NT) is a binding site for pyridoxal 5'-phosphate.

It belongs to the class-V pyridoxal-phosphate-dependent aminotransferase family. SerC subfamily. Homodimer. The cofactor is pyridoxal 5'-phosphate.

The protein localises to the cytoplasm. The catalysed reaction is O-phospho-L-serine + 2-oxoglutarate = 3-phosphooxypyruvate + L-glutamate. The enzyme catalyses 4-(phosphooxy)-L-threonine + 2-oxoglutarate = (R)-3-hydroxy-2-oxo-4-phosphooxybutanoate + L-glutamate. Its pathway is amino-acid biosynthesis; L-serine biosynthesis; L-serine from 3-phospho-D-glycerate: step 2/3. It participates in cofactor biosynthesis; pyridoxine 5'-phosphate biosynthesis; pyridoxine 5'-phosphate from D-erythrose 4-phosphate: step 3/5. Its function is as follows. Catalyzes the reversible conversion of 3-phosphohydroxypyruvate to phosphoserine and of 3-hydroxy-2-oxo-4-phosphonooxybutanoate to phosphohydroxythreonine. The protein is Phosphoserine aminotransferase of Sodalis glossinidius (strain morsitans).